Here is a 191-residue protein sequence, read N- to C-terminus: Leucyl/phenylalanyl-tRNA--protein transferase (191 aa).

It belongs to the L/F-transferase family.

Its subcellular location is the cytoplasm. The catalysed reaction is N-terminal L-lysyl-[protein] + L-leucyl-tRNA(Leu) = N-terminal L-leucyl-L-lysyl-[protein] + tRNA(Leu) + H(+). The enzyme catalyses N-terminal L-arginyl-[protein] + L-leucyl-tRNA(Leu) = N-terminal L-leucyl-L-arginyl-[protein] + tRNA(Leu) + H(+). It carries out the reaction L-phenylalanyl-tRNA(Phe) + an N-terminal L-alpha-aminoacyl-[protein] = an N-terminal L-phenylalanyl-L-alpha-aminoacyl-[protein] + tRNA(Phe). Functions in the N-end rule pathway of protein degradation where it conjugates Leu, Phe and, less efficiently, Met from aminoacyl-tRNAs to the N-termini of proteins containing an N-terminal arginine or lysine. This is Leucyl/phenylalanyl-tRNA--protein transferase from Herpetosiphon aurantiacus (strain ATCC 23779 / DSM 785 / 114-95).